The primary structure comprises 613 residues: Pentatricopeptide repeat-containing protein At2g45350, chloroplastic (613 aa).

13 PPR repeats span residues 85–119, 120–154, 155–185, 186–216, 219–250, 251–285, 286–312, 313–347, 349–383, 384–414, 415–449, 450–480, and 486–516; these read DPFL…GVSV, DKFS…GLWS, DLFL…MPKR, DSVS…MPME, NLIS…MPEK, DLIS…DVVT, WATM…MPHR, DVVA…SHLL, DDTT…QFYL, GGKL…IENK, SIDH…SLKP, DDIT…MRRK, and RLQH…MPVE. The segment at 521 to 596 is type E motif; that stretch reads IWRTFLTACS…IPGCSWIELD (76 aa).

This sequence belongs to the PPR family. PCMP-E subfamily. In terms of assembly, interacts with DYW1.

Its subcellular location is the plastid. The protein resides in the chloroplast. In terms of biological role, plays a major role in chloroplast RNA editing. Acts as a site-recognition transacting factor to recruit C-deaminase. Involved in single RNA editing events. Required for the edition of the site 1 of ndhD (ndhD-1 site corresponding to cytidine-2), which is a plastid-encoded subunit of the NADH-plastoquinone oxidoreductase. The interaction with DYW1 is required for its function in editing the ndhD-1 site. The polypeptide is Pentatricopeptide repeat-containing protein At2g45350, chloroplastic (CRR4) (Arabidopsis thaliana (Mouse-ear cress)).